A 157-amino-acid polypeptide reads, in one-letter code: MTLRFDVAPPKKVHCLRVIGPYYQSVPDGFQKLMAWSQEQQLPWTETLAFYWDDPSETEQDQLRADVALVLPEGTAIGENTLGVREETVPGGLFAVLHTIVSNGEFAKAWNELYDLIAQNGYKPARGICFESYLCDGSSGNWEIEIWQSVDPNDGAQ.

This sequence belongs to the DNA gyrase inhibitor family. As to quaternary structure, interacts with DNA gyrase.

It localises to the cytoplasm. Inhibits the supercoiling activity of DNA gyrase. Acts by inhibiting DNA gyrase at an early step, prior to (or at the step of) binding of DNA by the gyrase. It protects cells against toxins that target DNA gyrase, by inhibiting activity of these toxins and reducing the formation of lethal double-strand breaks in the cell. This chain is DNA gyrase inhibitor 2, found in Dickeya dadantii (strain 3937) (Erwinia chrysanthemi (strain 3937)).